Consider the following 208-residue polypeptide: Small ribosomal subunit protein eS8 (208 aa).

The disordered stretch occupies residues M1 to K37. The span at W8–K26 shows a compositional bias: basic residues.

The protein belongs to the eukaryotic ribosomal protein eS8 family. Component of the small ribosomal subunit. Identified in a IGF2BP1-dependent mRNP granule complex containing untranslated mRNAs. Part of the small subunit (SSU) processome, composed of more than 70 proteins and the RNA chaperone small nucleolar RNA (snoRNA) U3.

The protein localises to the cytoplasm. The protein resides in the membrane. Its subcellular location is the nucleus. It localises to the nucleolus. In terms of biological role, component of the small ribosomal subunit. The ribosome is a large ribonucleoprotein complex responsible for the synthesis of proteins in the cell. Part of the small subunit (SSU) processome, first precursor of the small eukaryotic ribosomal subunit. During the assembly of the SSU processome in the nucleolus, many ribosome biogenesis factors, an RNA chaperone and ribosomal proteins associate with the nascent pre-rRNA and work in concert to generate RNA folding, modifications, rearrangements and cleavage as well as targeted degradation of pre-ribosomal RNA by the RNA exosome. In Xenopus laevis (African clawed frog), this protein is Small ribosomal subunit protein eS8 (rps8).